A 251-amino-acid polypeptide reads, in one-letter code: Aspartate/glutamate leucyltransferase (251 aa).

The protein belongs to the R-transferase family. Bpt subfamily.

The protein resides in the cytoplasm. It carries out the reaction N-terminal L-glutamyl-[protein] + L-leucyl-tRNA(Leu) = N-terminal L-leucyl-L-glutamyl-[protein] + tRNA(Leu) + H(+). The catalysed reaction is N-terminal L-aspartyl-[protein] + L-leucyl-tRNA(Leu) = N-terminal L-leucyl-L-aspartyl-[protein] + tRNA(Leu) + H(+). Functionally, functions in the N-end rule pathway of protein degradation where it conjugates Leu from its aminoacyl-tRNA to the N-termini of proteins containing an N-terminal aspartate or glutamate. The protein is Aspartate/glutamate leucyltransferase of Xanthomonas euvesicatoria pv. vesicatoria (strain 85-10) (Xanthomonas campestris pv. vesicatoria).